A 271-amino-acid chain; its full sequence is Energy-coupling factor transporter ATP-binding protein EcfA (271 aa).

The region spanning 2–231 is the ABC transporter domain; that stretch reads ISIQNLTFYY…PLFLQQYKLT (230 aa). 34-41 provides a ligand contact to ATP; that stretch reads GHNGSGKS.

Belongs to the ABC transporter superfamily. Energy-coupling factor EcfA family. Forms a stable energy-coupling factor (ECF) transporter complex composed of 2 membrane-embedded substrate-binding proteins (S component), 2 ATP-binding proteins (A component) and 2 transmembrane proteins (T component).

The protein localises to the cell membrane. Functionally, ATP-binding (A) component of a common energy-coupling factor (ECF) ABC-transporter complex. Unlike classic ABC transporters this ECF transporter provides the energy necessary to transport a number of different substrates. The protein is Energy-coupling factor transporter ATP-binding protein EcfA of Aster yellows witches'-broom phytoplasma (strain AYWB).